Reading from the N-terminus, the 390-residue chain is MKIHEYQAKEILRRHKANVPFGVVIDKKENASKAHDEVTSKTGGSVVVVKAQIHAGGRGKGGGVKVTKTKEDAIAAVDKILGMQLITPQTGPEGKKVLKVYLEQGIDIAKEYYLSILLDRSIRKTIIMASTEGGMEIEEVAETHPEKILKIAIDPGIGLQVNQARQLAFELGLPAESHKSFQSLLAAIYEAYIKEDASLLEINPLILTKQNEIIAGDCKIDLDENALYRHADNAAFRDITEEDPLEVQASEFNLNYVKLDGNIGCMVNGAGLAMATMDIVKLAGAEPANFLDVGGGANKTTVTNGFKIILGDPNVKGIFVNIFGGIVRCDMVAEGIIEAAKAVDLKVPLVVRLQGTNSELGREVLNKSGLKITGVDDLREAASTIAKLIG.

The ATP-grasp domain maps to 9-248 (KEILRRHKAN…ITEEDPLEVQ (240 aa)). ATP contacts are provided by residues lysine 50, 57–59 (GRG), glutamate 103, isoleucine 106, and glutamate 111. 2 residues coordinate Mg(2+): asparagine 203 and aspartate 217. Substrate contacts are provided by residues asparagine 268 and 325-327 (GIV).

The protein belongs to the succinate/malate CoA ligase beta subunit family. In terms of assembly, heterotetramer of two alpha and two beta subunits. Requires Mg(2+) as cofactor.

The enzyme catalyses succinate + ATP + CoA = succinyl-CoA + ADP + phosphate. It catalyses the reaction GTP + succinate + CoA = succinyl-CoA + GDP + phosphate. It participates in carbohydrate metabolism; tricarboxylic acid cycle; succinate from succinyl-CoA (ligase route): step 1/1. Succinyl-CoA synthetase functions in the citric acid cycle (TCA), coupling the hydrolysis of succinyl-CoA to the synthesis of either ATP or GTP and thus represents the only step of substrate-level phosphorylation in the TCA. The beta subunit provides nucleotide specificity of the enzyme and binds the substrate succinate, while the binding sites for coenzyme A and phosphate are found in the alpha subunit. This Leptospira interrogans serogroup Icterohaemorrhagiae serovar copenhageni (strain Fiocruz L1-130) protein is Succinate--CoA ligase [ADP-forming] subunit beta.